Here is an 88-residue protein sequence, read N- to C-terminus: Apolipoprotein C-I (88 aa).

A signal peptide spans 1–26; sequence MRLFISLPILIVVLAMALEGPAPAQA.

It belongs to the apolipoprotein C1 family.

The protein resides in the secreted. Functionally, inhibitor of lipoprotein binding to the low density lipoprotein (LDL) receptor, LDL receptor-related protein, and very low density lipoprotein (VLDL) receptor. Associates with high density lipoproteins (HDL) and the triacylglycerol-rich lipoproteins in the plasma and makes up about 10% of the protein of the VLDL and 2% of that of HDL. Appears to interfere directly with fatty acid uptake and is also the major plasma inhibitor of cholesteryl ester transfer protein (CETP). Modulates the interaction of APOE with beta-migrating VLDL and inhibits binding of beta-VLDL to the LDL receptor-related protein. Binds free fatty acids and reduces their intracellular esterification. This chain is Apolipoprotein C-I (Apoc1), found in Neotoma lepida (Desert woodrat).